A 267-amino-acid chain; its full sequence is Hydroxyethylthiazole kinase 2 (267 aa).

Met41 provides a ligand contact to substrate. ATP-binding residues include Lys116 and Thr166. Position 193 (Gly193) interacts with substrate.

This sequence belongs to the Thz kinase family. Requires Mg(2+) as cofactor.

It catalyses the reaction 5-(2-hydroxyethyl)-4-methylthiazole + ATP = 4-methyl-5-(2-phosphooxyethyl)-thiazole + ADP + H(+). Its pathway is cofactor biosynthesis; thiamine diphosphate biosynthesis; 4-methyl-5-(2-phosphoethyl)-thiazole from 5-(2-hydroxyethyl)-4-methylthiazole: step 1/1. Catalyzes the phosphorylation of the hydroxyl group of 4-methyl-5-beta-hydroxyethylthiazole (THZ). The chain is Hydroxyethylthiazole kinase 2 from Streptococcus pneumoniae (strain Hungary19A-6).